Consider the following 129-residue polypeptide: Profilin-4 (129 aa).

This sequence belongs to the profilin family.

The protein localises to the cytoplasm. Functionally, involved in male fertility. Required for manchette development and acrosome biogenesis during spermiogenesis. Binds in vitro to phospholipids, including phosphatidylinositol 3-phosphate (PtdIns(3)P), phosphatidylinositol 4,5-bisphosphate (PtdIns(4,5)P2), phosphatidylinositol 4-phosphate (PtdIns(4)P) and phosphatidic acid (PA). Contrary to other profilin family members, does not bind to actin in vitro. The polypeptide is Profilin-4 (PFN4) (Bos taurus (Bovine)).